A 702-amino-acid chain; its full sequence is Rho GTPase-activating protein 22 (702 aa).

One can recognise a PH domain in the interval 43 to 151 (PVLKAGWLRK…WVQAIRRVIW (109 aa)). Residues 161–355 (QRLEDTVHHE…VLIRKHGQLF (195 aa)) enclose the Rho-GAP domain. Disordered stretches follow at residues 360–433 (LEEP…HTLP), 438–457 (SFRQ…SSLE), 480–511 (RASS…FSST), and 555–596 (PSPL…TQAH). A phosphoserine mark is found at Ser-365 and Ser-397. Composition is skewed to polar residues over residues 407–421 (SRTS…TGPA), 438–456 (SFRQ…NSSL), 491–504 (GSAQ…NVPP), and 581–594 (SGSS…SPTQ). The stretch at 594–691 (QAHVRRCRAL…EEFFSTLGSL (98 aa)) forms a coiled coil.

As to quaternary structure, interacts with VEZF1. In terms of tissue distribution, predominantly present in endothelial cells (at protein level).

The protein resides in the cytoplasm. It is found in the nucleus. In terms of biological role, rho GTPase-activating protein involved in the signal transduction pathway that regulates endothelial cell capillary tube formation during angiogenesis. Acts as a GTPase activator for the RAC1 by converting it to an inactive GDP-bound state. Inhibits RAC1-dependent lamellipodia formation. May also play a role in transcription regulation via its interaction with VEZF1, by regulating activity of the endothelin-1 (EDN1) promoter. The polypeptide is Rho GTPase-activating protein 22 (Arhgap22) (Mus musculus (Mouse)).